Reading from the N-terminus, the 313-residue chain is Cobalamin biosynthesis protein CobD (313 aa).

5 consecutive transmembrane segments (helical) span residues 52-72 (VAGA…GAAL), 79-99 (CWPV…TSLA), 154-174 (VVPL…YRAI), 204-224 (YVGA…VGGS), and 289-309 (AVVL…MLVY).

The protein belongs to the CobD/CbiB family.

Its subcellular location is the cell membrane. It participates in cofactor biosynthesis; adenosylcobalamin biosynthesis. Converts cobyric acid to cobinamide by the addition of aminopropanol on the F carboxylic group. The sequence is that of Cobalamin biosynthesis protein CobD from Mycobacterium bovis (strain ATCC BAA-935 / AF2122/97).